The primary structure comprises 347 residues: Dual specificity mitogen-activated protein kinase kinase mek-1 (347 aa).

The disordered stretch occupies residues 1–42; that stretch reads MERDFDLGMGRPGGLGGLGGEPIMQQMPQPAPHHPSRSSNDH. Over residues 10 to 20 the composition is skewed to gly residues; that stretch reads GRPGGLGGLGG. The Protein kinase domain maps to 72–325; the sequence is LQFVEDIGHG…YDMLLQHPFV (254 aa). ATP contacts are provided by residues 78–86 and lysine 99; that span reads IGHGSCGTV. Catalysis depends on aspartate 193, which acts as the Proton acceptor. 2 positions are modified to phosphoserine: serine 221 and serine 225.

Belongs to the protein kinase superfamily. STE Ser/Thr protein kinase family. MAP kinase kinase subfamily. In terms of assembly, interacts with shc-1; the interaction is independent of mek-1 catalytic activity, is constitutive and may facilitate mlk-1-mediated phosphorylation by bringing mlk-1 and mek-1 together. Mg(2+) serves as cofactor. Post-translationally, may be phosphorylated at Ser-221 and/or Ser-225 by mlk-1. In terms of tissue distribution, expressed in pharyngeal muscles, uterine endothelial cells, intestine and in neurons of ring ganglia, ventral ganglion and ganglia around anus. Expressed also in hypodermis and body muscles.

It carries out the reaction L-seryl-[protein] + ATP = O-phospho-L-seryl-[protein] + ADP + H(+). It catalyses the reaction L-threonyl-[protein] + ATP = O-phospho-L-threonyl-[protein] + ADP + H(+). The catalysed reaction is L-tyrosyl-[protein] + ATP = O-phospho-L-tyrosyl-[protein] + ADP + H(+). May be activated by phosphorylation at Ser-221 and Ser-225. In terms of biological role, dual specificity protein kinase which may phosphorylate kgb-1 and thereby is an essential component of the JNK pathway composed of mlk-1, mek-1 and kgb-1. May also have a synergistic role with sek-1 in phosphorylating pmk-1. Involved in the response to environmental stress including heavy metal ions (Cu(2+) and Cd(2+)), oxidative stress and starvation. In association with sek-1, regulates germline cell apoptosis in response to oxidative, osmotic and heat shock stresses. Involved in resistance to pathogenic bacteria infection. Involved in axon regeneration after injury. The sequence is that of Dual specificity mitogen-activated protein kinase kinase mek-1 from Caenorhabditis elegans.